The primary structure comprises 268 residues: Ribosomal RNA small subunit methyltransferase A (268 aa).

6 residues coordinate S-adenosyl-L-methionine: Asn18, Leu20, Gly45, Glu66, Asp91, and Asn112.

Belongs to the class I-like SAM-binding methyltransferase superfamily. rRNA adenine N(6)-methyltransferase family. RsmA subfamily.

The protein localises to the cytoplasm. The catalysed reaction is adenosine(1518)/adenosine(1519) in 16S rRNA + 4 S-adenosyl-L-methionine = N(6)-dimethyladenosine(1518)/N(6)-dimethyladenosine(1519) in 16S rRNA + 4 S-adenosyl-L-homocysteine + 4 H(+). Specifically dimethylates two adjacent adenosines (A1518 and A1519) in the loop of a conserved hairpin near the 3'-end of 16S rRNA in the 30S particle. May play a critical role in biogenesis of 30S subunits. In Shewanella baltica (strain OS185), this protein is Ribosomal RNA small subunit methyltransferase A.